The primary structure comprises 234 residues: Multicopy suppressor of SEC21 protein 27 (234 aa).

Topologically, residues 1 to 47 (MQTPLESTDVKLDTLNEPSAHLIEKNVALPKDIFRSYLSYWIYEIAR) are cytoplasmic. The residue at position 3 (Thr-3) is a Phosphothreonine. Residues 48-68 (YTPVMILSLVIGVLVLLIIFF) form a helical membrane-spanning segment. Topologically, residues 69-72 (NDNE) are extracellular. The chain crosses the membrane as a helical span at residues 73–93 (ACVFNSAYYAYLSLVVLLIIL). At 94 to 234 (GDGNPKLVSR…NIDALLKKTE (141 aa)) the chain is on the cytoplasmic side. The tract at residues 231 to 234 (KKTE) is COPI binding.

The protein belongs to the DUP/COS family. As to quaternary structure, interacts with MST28. Binds to coatomer proteins of COPI and SEC23/SEC24 of COPII coated vesicles.

It is found in the endoplasmic reticulum. The protein localises to the golgi apparatus. Its subcellular location is the cytoplasmic vesicle. The protein resides in the COPI-coated vesicle membrane. It localises to the COPII-coated vesicle membrane. In terms of biological role, involved in protein trafficking vesicle formation, probably by stabilizing of coatomer at the Golgi membrane and thus allowing the efficient formation of COPI coated vesicles. In Saccharomyces cerevisiae (strain ATCC 204508 / S288c) (Baker's yeast), this protein is Multicopy suppressor of SEC21 protein 27 (MST27).